The following is a 342-amino-acid chain: Flotillin-like protein FloA (342 aa).

A run of 2 helical transmembrane segments spans residues 18-38 (FFIFVLAIVLLIILSVIGKFI) and 39-59 (SLWFQAFVSGTPIPLFNIIGM).

The protein belongs to the flotillin-like FloA family. In terms of assembly, homooligomerizes.

The protein localises to the cell membrane. It localises to the membrane raft. Functionally, found in functional membrane microdomains (FMM) that may be equivalent to eukaryotic membrane rafts. FMMs are highly dynamic and increase in number as cells age. Flotillins are thought to be important factors in membrane fluidity. In Protochlamydia amoebophila (strain UWE25), this protein is Flotillin-like protein FloA.